The chain runs to 138 residues: Protein Turandot B (138 aa).

Positions 1 to 21 are cleaved as a signal peptide; it reads MNFKTSLICFALLLIGTLCSA.

The protein belongs to the Turandot family.

It localises to the secreted. In terms of biological role, a humoral factor that may play a role in stress tolerance. The sequence is that of Protein Turandot B from Drosophila melanogaster (Fruit fly).